A 353-amino-acid chain; its full sequence is Outer membrane protein P5 (353 aa).

Positions 1 to 21 (MKKTAIALVVAGLAAASVAQA) are cleaved as a signal peptide. Beta stranded transmembrane passes span 27-37 (TFYAGVKAGQA), 58-69 (SFTYGVFGGYQI), 77-85 (LAVELGYDD), 104-115 (HGTHLSLKGSYE), 120-128 (LDVYGKAGV), 158-167 (GLFAVGAEYA), 172-179 (LAVRLEYQ), and 205-213 (SINAGISYR). An OmpA-like domain is found at 227 to 353 (VVSKTFSLNS…RVEIAVNGTK (127 aa)). Cys326 and Cys338 are oxidised to a cystine.

Belongs to the outer membrane OOP (TC 1.B.6) superfamily. OmpA family. As to quaternary structure, monomer and homodimer.

The protein localises to the cell outer membrane. In terms of biological role, with TolR probably plays a role in maintaining the position of the peptidoglycan cell wall in the periplasm. Acts as a porin with low permeability that allows slow penetration of small solutes; an internal gate slows down solute passage. Reconstitution in planar bilayers with lithium dodecyl sulfate-solublized P5 yields narrow pores (58 pS conductance) with a low probability of opening, whereas n-octyl-bD-glucopyranoside-solubilized P5 forms large pores (1.1 nS conductance) with high open probability. The large pore easily converts to the smaller pore at room temperature; at 42 degrees Celsius the smaller pore converts to the larger one. The polypeptide is Outer membrane protein P5 (Haemophilus influenzae (strain ATCC 51907 / DSM 11121 / KW20 / Rd)).